The sequence spans 423 residues: MSYQRRHSRWYERVLFSPPSLFFLGAMLAVCLPALERWGWGFWEYFDAVRVNTLGGAFVAFLLTGIVLYRFLRYPGASPVAYMIPTVTTLYGSLVGALFFLRLPYSRQVLFESYVVALLCCWVVYFIGRRYRTPKYALLPFGDYQPLMHHTCVEWRLLDKPDLGAVRYDAVVADLRDDDLAGEWERFLARCALAHIPVYHIKQISETLTGRVKIDHLHENQLGSLLPSPIYAFIKRGMDILAAVIAIPLFSPLMLATAVLIKLESPGPVMFLQNRVGKGNRDFRIYKFRSMCQNSEQHGAQFAQDGDMRVTRVGKVIRKLRIDELPQFFNVLKGDMSLIGPRPEQRTFVDQFDREIPFYMYRHIVRPGISGWAQVVHGYAADADDTRIKIEHDFYYIKNFSLWLDVLIVFKTIRTILTGFGAR.

Residues 1–13 (MSYQRRHSRWYER) lie on the Extracellular side of the membrane. The chain crosses the membrane as a helical span at residues 14 to 34 (VLFSPPSLFFLGAMLAVCLPA). Over 35 to 47 (LERWGWGFWEYFD) the chain is Cytoplasmic. The chain crosses the membrane as a helical span at residues 48-68 (AVRVNTLGGAFVAFLLTGIVL). At 69–79 (YRFLRYPGASP) the chain is on the extracellular side. Residues 80–100 (VAYMIPTVTTLYGSLVGALFF) form a helical membrane-spanning segment. The Cytoplasmic portion of the chain corresponds to 101 to 107 (LRLPYSR). Residues 108–128 (QVLFESYVVALLCCWVVYFIG) traverse the membrane as a helical segment. Topologically, residues 129–239 (RRYRTPKYAL…IYAFIKRGMD (111 aa)) are extracellular. The helical transmembrane segment at 240-260 (ILAAVIAIPLFSPLMLATAVL) threads the bilayer. The Cytoplasmic portion of the chain corresponds to 261–423 (IKLESPGPVM…RTILTGFGAR (163 aa)).

This sequence belongs to the bacterial sugar transferase family.

The protein resides in the membrane. It carries out the reaction di-trans,octa-cis-undecaprenyl phosphate + UDP-N-acetyl-alpha-D-galactosamine = N-acetyl-alpha-D-galactosaminyl-di-trans,octa-cis-undecaprenyl diphosphate + UMP. It participates in bacterial outer membrane biogenesis; LPS O-antigen biosynthesis. Transfers N-acetyl-galactosamine (GalNAc) to undecaprenyl phosphate, a step in the assembly of the repeating-unit of the O-antigen. Shows no activity with UDP-N-acetyl-alpha-D-glucosamine. In Aeromonas hydrophila, this protein is UDP-N-acetylgalactosamine-undecaprenyl-phosphate N-acetylgalactosaminephosphotransferase (wecA).